A 239-amino-acid chain; its full sequence is MLNIGLSGSTGKMGGTILERIDKFKDCKIAAKFNSTNNLDDLDNFCKNSDVIIDFSTPEILEKLINYALKHNTKLVIGTTGLQPQHFKLLEKAAQTLPVLYSANMSIGANLLSYLAKEVTKILDDYDVEILETHHRNKKDSPSGTAVMLAETIASKKGLNITFNRGNRLRSEKEIGISSLRGGNVHGIHEISFLGDDEIITLKHEALNKNSFSIGAIKAAIWLQDKPSALYSMQDIYKI.

Residues 8–13, 78–80, and 102–105 contribute to the NAD(+) site; these read GSTGKM, GTT, and SANM. His-134 serves as the catalytic Proton donor/acceptor. Residue His-135 coordinates (S)-2,3,4,5-tetrahydrodipicolinate. Lys-138 acts as the Proton donor in catalysis. 144 to 145 is a binding site for (S)-2,3,4,5-tetrahydrodipicolinate; that stretch reads GT.

This sequence belongs to the DapB family.

It localises to the cytoplasm. The catalysed reaction is (S)-2,3,4,5-tetrahydrodipicolinate + NAD(+) + H2O = (2S,4S)-4-hydroxy-2,3,4,5-tetrahydrodipicolinate + NADH + H(+). It catalyses the reaction (S)-2,3,4,5-tetrahydrodipicolinate + NADP(+) + H2O = (2S,4S)-4-hydroxy-2,3,4,5-tetrahydrodipicolinate + NADPH + H(+). It participates in amino-acid biosynthesis; L-lysine biosynthesis via DAP pathway; (S)-tetrahydrodipicolinate from L-aspartate: step 4/4. Functionally, catalyzes the conversion of 4-hydroxy-tetrahydrodipicolinate (HTPA) to tetrahydrodipicolinate. This chain is 4-hydroxy-tetrahydrodipicolinate reductase, found in Rickettsia africae (strain ESF-5).